The primary structure comprises 506 residues: AMP phosphorylase (506 aa).

AMP is bound by residues Gly-167, 193–198 (SRAITG), and Thr-202. The active-site Proton donor is Asp-255. Residues Ser-263 and Lys-287 each coordinate AMP.

It belongs to the thymidine/pyrimidine-nucleoside phosphorylase family. Type 2 subfamily.

It carries out the reaction AMP + phosphate = alpha-D-ribose 1,5-bisphosphate + adenine. The catalysed reaction is CMP + phosphate = cytosine + alpha-D-ribose 1,5-bisphosphate. It catalyses the reaction UMP + phosphate = alpha-D-ribose 1,5-bisphosphate + uracil. Its function is as follows. Catalyzes the conversion of AMP and phosphate to adenine and ribose 1,5-bisphosphate (R15P). Exhibits phosphorylase activity toward CMP and UMP in addition to AMP. Functions in an archaeal AMP degradation pathway, together with R15P isomerase and RubisCO. This chain is AMP phosphorylase, found in Methanosarcina barkeri (strain Fusaro / DSM 804).